Consider the following 134-residue polypeptide: Phosphoribosyl-AMP cyclohydrolase (134 aa).

Aspartate 80 is a binding site for Mg(2+). Zn(2+) is bound at residue cysteine 81. Mg(2+)-binding residues include aspartate 82 and aspartate 84. Zn(2+) is bound by residues cysteine 98 and cysteine 105.

This sequence belongs to the PRA-CH family. In terms of assembly, homodimer. Mg(2+) is required as a cofactor. Requires Zn(2+) as cofactor.

The protein localises to the cytoplasm. It carries out the reaction 1-(5-phospho-beta-D-ribosyl)-5'-AMP + H2O = 1-(5-phospho-beta-D-ribosyl)-5-[(5-phospho-beta-D-ribosylamino)methylideneamino]imidazole-4-carboxamide. It functions in the pathway amino-acid biosynthesis; L-histidine biosynthesis; L-histidine from 5-phospho-alpha-D-ribose 1-diphosphate: step 3/9. In terms of biological role, catalyzes the hydrolysis of the adenine ring of phosphoribosyl-AMP. This Bordetella petrii (strain ATCC BAA-461 / DSM 12804 / CCUG 43448) protein is Phosphoribosyl-AMP cyclohydrolase.